The sequence spans 1057 residues: MPKRDDIKTILVVGSGPIIIGQAAEFDYAGTQACLALKEEGYRVILVNSNPATIMTDKEIADKVYIEPLTHDFIARIIRKEQPDALLPTLGGQTGLNMAIQLHDSGVLEANNVKLLGTELESIQQAEDREMFRTLMNDLNVPVPESDIVNTVEQAFEFKEQVGYPLIVRPAFTMGGTGGGICHNDAELKEVVSNGLHYSPATQCLIEKSIAGYKEIEYEVMRDKNDNAIVVCNMENIDPVGIHTGDSIVVAPSQTLSDVEYQMLRDVSLKVIRALGIEGGCNVQLALDPHSLNYYIIEVNPRVSRSSALASKATGYPIAKLAAKIAVGLTLDEMLNPITGTSYAAFEPTLDYVISKIPRFPFDKFEKGERELGTQMKATGEVMAIGRTYEESLLKAIRSLEYGVHHLGLSNGESYELDYIKERIGHQDDERLFFIGEAIRRGTSLEELHNMTKIDYFFLNKFQNIIDIEHELKNHQGDLEYLKYAKDYGFSDKVIAHRWDKEEKDIYQLRMSQNIKPVYKMVDTCAAEFESTTPYYYGTYEYENESIVTDKEKILVLGSGPIRIGQGVEFDYATVHAVWAIQNAGYEAIIVNNNPETVSTDFSISDKLYFEPLTEEDVMNIINLEQPKGVVVQFGGQTAINLADKLAQHGVKILGTSLEDLNRAEDRKEFEALLREIAVPQPQGKTATSPKEALENAREIGYPVVVRPSYVLGGRAMEIVDNDQELENYMTQAVKASPEHPVLVDRYLTGKEIEVDAISDGETVVIPGIMEHIERAGVHSGDSIAVYPPQTLTQDEINTLEDYTIKLAKGLNIKGLINIQFVIAHDGVYVLEVNPRSSRTVPFLSKITDIQMAQLAMRAIMGETLAEIGFKQGIQPYSEGVYVKAPVFSFNKLKNVDITLGPEMKSTGEVMGKDLTLEKALYKGLTGSGFEVKDHGTVLMTVSDKDKDEIVKIAHRLNEIGYKILATRGTAQKLKDHNIPVEVVGKIGGEDDLLTRIQNGEVQIVINTMTKGKEIERDGFQIRRTTVENGVPCLTSLDTASALTNVIESMTFTMRNV.

The segment at 1–401 (MPKRDDIKTI…SLLKAIRSLE (401 aa)) is carboxyphosphate synthetic domain. ATP is bound by residues R129, R169, G175, G176, K208, I210, E215, G241, I242, H243, Q284, and E298. Residues 133-327 (RTLMNDLNVP…IAKLAAKIAV (195 aa)) form the ATP-grasp 1 domain. Mg(2+)-binding residues include Q284, E298, and N300. Residues Q284, E298, and N300 each coordinate Mn(2+). The tract at residues 402-546 (YGVHHLGLSN…YGTYEYENES (145 aa)) is oligomerization domain. The segment at 547 to 929 (IVTDKEKILV…ALYKGLTGSG (383 aa)) is carbamoyl phosphate synthetic domain. Residues 671 to 861 (EALLREIAVP…MAQLAMRAIM (191 aa)) enclose the ATP-grasp 2 domain. ATP is bound by residues R707, R746, L748, E752, G777, V778, H779, S780, Q820, and E832. Residues Q820, E832, and N834 each contribute to the Mg(2+) site. Mn(2+) contacts are provided by Q820, E832, and N834. The MGS-like domain occupies 930–1057 (FEVKDHGTVL…ESMTFTMRNV (128 aa)). The segment at 930 to 1057 (FEVKDHGTVL…ESMTFTMRNV (128 aa)) is allosteric domain.

Belongs to the CarB family. Composed of two chains; the small (or glutamine) chain promotes the hydrolysis of glutamine to ammonia, which is used by the large (or ammonia) chain to synthesize carbamoyl phosphate. Tetramer of heterodimers (alpha,beta)4. It depends on Mg(2+) as a cofactor. Requires Mn(2+) as cofactor.

The catalysed reaction is hydrogencarbonate + L-glutamine + 2 ATP + H2O = carbamoyl phosphate + L-glutamate + 2 ADP + phosphate + 2 H(+). The enzyme catalyses hydrogencarbonate + NH4(+) + 2 ATP = carbamoyl phosphate + 2 ADP + phosphate + 2 H(+). It functions in the pathway amino-acid biosynthesis; L-arginine biosynthesis; carbamoyl phosphate from bicarbonate: step 1/1. The protein operates within pyrimidine metabolism; UMP biosynthesis via de novo pathway; (S)-dihydroorotate from bicarbonate: step 1/3. Its function is as follows. Large subunit of the glutamine-dependent carbamoyl phosphate synthetase (CPSase). CPSase catalyzes the formation of carbamoyl phosphate from the ammonia moiety of glutamine, carbonate, and phosphate donated by ATP, constituting the first step of 2 biosynthetic pathways, one leading to arginine and/or urea and the other to pyrimidine nucleotides. The large subunit (synthetase) binds the substrates ammonia (free or transferred from glutamine from the small subunit), hydrogencarbonate and ATP and carries out an ATP-coupled ligase reaction, activating hydrogencarbonate by forming carboxy phosphate which reacts with ammonia to form carbamoyl phosphate. In Staphylococcus epidermidis (strain ATCC 12228 / FDA PCI 1200), this protein is Carbamoyl phosphate synthase large chain.